We begin with the raw amino-acid sequence, 209 residues long: Large ribosomal subunit protein uL3 (209 aa).

The disordered stretch occupies residues 126-165; the sequence is HNFGGGSRTHGQSDRLRAPGSVGGSSDPSRTFRGTRMAGR.

Belongs to the universal ribosomal protein uL3 family. As to quaternary structure, part of the 50S ribosomal subunit. Forms a cluster with proteins L14 and L19.

Its function is as follows. One of the primary rRNA binding proteins, it binds directly near the 3'-end of the 23S rRNA, where it nucleates assembly of the 50S subunit. The chain is Large ribosomal subunit protein uL3 from Chlorobium limicola (strain DSM 245 / NBRC 103803 / 6330).